The sequence spans 429 residues: Cell cycle protein kinase spo4 (429 aa).

The region spanning 40 to 402 (YHVVKLVGAG…KAKTALQHEF (363 aa)) is the Protein kinase domain. ATP contacts are provided by residues 46–54 (VGAGSFSSV) and Lys95. Residue Asp182 is the Proton acceptor of the active site. Thr264 carries the phosphothreonine modification.

The protein belongs to the protein kinase superfamily. Ser/Thr protein kinase family. CDC7 subfamily. Interacts with spo6.

Its subcellular location is the nucleus. The enzyme catalyses L-seryl-[protein] + ATP = O-phospho-L-seryl-[protein] + ADP + H(+). The catalysed reaction is L-threonyl-[protein] + ATP = O-phospho-L-threonyl-[protein] + ADP + H(+). In terms of biological role, required for the initiation of meiosis II and progression through anaphase II. The protein is Cell cycle protein kinase spo4 (spo4) of Schizosaccharomyces pombe (strain 972 / ATCC 24843) (Fission yeast).